Here is a 194-residue protein sequence, read N- to C-terminus: Orotate phosphoribosyltransferase (194 aa).

5-phospho-alpha-D-ribose 1-diphosphate contacts are provided by residues lysine 98 and 122-130 (EDVLTTGGS). Orotate-binding residues include threonine 126 and arginine 154.

It belongs to the purine/pyrimidine phosphoribosyltransferase family. PyrE subfamily. In terms of assembly, homodimer. Requires Mg(2+) as cofactor.

The enzyme catalyses orotidine 5'-phosphate + diphosphate = orotate + 5-phospho-alpha-D-ribose 1-diphosphate. It functions in the pathway pyrimidine metabolism; UMP biosynthesis via de novo pathway; UMP from orotate: step 1/2. Functionally, catalyzes the transfer of a ribosyl phosphate group from 5-phosphoribose 1-diphosphate to orotate, leading to the formation of orotidine monophosphate (OMP). The protein is Orotate phosphoribosyltransferase of Deinococcus radiodurans (strain ATCC 13939 / DSM 20539 / JCM 16871 / CCUG 27074 / LMG 4051 / NBRC 15346 / NCIMB 9279 / VKM B-1422 / R1).